Consider the following 110-residue polypeptide: Nucleoid-associated protein SYO3AOP1_1366 (110 aa).

The protein belongs to the YbaB/EbfC family. In terms of assembly, homodimer.

It is found in the cytoplasm. The protein resides in the nucleoid. In terms of biological role, binds to DNA and alters its conformation. May be involved in regulation of gene expression, nucleoid organization and DNA protection. In Sulfurihydrogenibium sp. (strain YO3AOP1), this protein is Nucleoid-associated protein SYO3AOP1_1366.